Here is a 219-residue protein sequence, read N- to C-terminus: tRNA (guanine-N(7)-)-methyltransferase (219 aa).

The S-adenosyl-L-methionine site is built by E44, D69, E102, and N125. Substrate contacts are provided by K129 and D161.

This sequence belongs to the class I-like SAM-binding methyltransferase superfamily. TrmB family.

The catalysed reaction is guanosine(46) in tRNA + S-adenosyl-L-methionine = N(7)-methylguanosine(46) in tRNA + S-adenosyl-L-homocysteine. It functions in the pathway tRNA modification; N(7)-methylguanine-tRNA biosynthesis. Catalyzes the formation of N(7)-methylguanine at position 46 (m7G46) in tRNA. This Clostridium perfringens (strain SM101 / Type A) protein is tRNA (guanine-N(7)-)-methyltransferase.